The following is a 1062-amino-acid chain: Inactive tyrosine-protein kinase 7 (1062 aa).

The N-terminal stretch at 1–22 (MGARPLTLLRALLLPLLAGAQA) is a signal peptide. Ig-like C2-type domains are found at residues 23–112 (AIVF…ASFN), 120–210 (PVVL…FTLS), 217–309 (ARVV…EATL), 301–399 (PPIV…VNIT), 404–489 (PTWL…ARVQ), 495–578 (KFTP…HVQL), and 570–672 (GQIR…APLL). Over 23–696 (AIVFIKEPSS…SPPPYKMIQT (674 aa)) the chain is Extracellular. A disulfide bridge connects residues cysteine 45 and cysteine 93. 6 N-linked (GlcNAc...) asparagine glycosylation sites follow: asparagine 98, asparagine 108, asparagine 176, asparagine 206, asparagine 260, and asparagine 275. The cysteines at positions 142 and 192 are disulfide-linked. 2 disulfides stabilise this stretch: cysteine 238/cysteine 293 and cysteine 335/cysteine 383. 4 N-linked (GlcNAc...) asparagine glycosylation sites follow: asparagine 397, asparagine 455, asparagine 559, and asparagine 638. 3 disulfides stabilise this stretch: cysteine 425–cysteine 473, cysteine 516–cysteine 562, and cysteine 605–cysteine 656. The chain crosses the membrane as a helical span at residues 697–717 (IGLSVGAAVAYIIAVLGLMFY). At 718-1062 (CKKRCKAKRL…LGDSPADSKQ (345 aa)) the chain is on the cytoplasmic side. Disordered stretches follow at residues 728–750 (QKQP…QNGQ) and 1039–1062 (NPKD…DSKQ). Positions 786–1062 (ASLQPITTLG…LGDSPADSKQ (277 aa)) are interaction with CTNNB1. The Protein kinase; inactive domain occupies 788 to 1058 (LQPITTLGKS…IASTLGDSPA (271 aa)). Phosphoserine is present on serine 1056.

It belongs to the protein kinase superfamily. Tyr protein kinase family. Insulin receptor subfamily. Interacts with CTNNB1. In terms of processing, MMP14 cleaves PTK7 between Pro-613 and Leu-614 generating an N-terminal soluble (70 kDa) fragment and a membrane C-terminal (50 kDa) fragment. Proteolysis by MMP14 regulates PTK7 function in non-canonical Wnt signaling pathway. As to expression, expressed at high levels in lung and un-pregnant uterus among adult tissues, and in the tail, limbs, somites, gut and craniofacial regions among embryonic tissues.

It is found in the membrane. The protein resides in the cell junction. Inactive tyrosine kinase involved in Wnt signaling pathway. Component of both the non-canonical (also known as the Wnt/planar cell polarity signaling) and the canonical Wnt signaling pathway. Functions in cell adhesion, cell migration, cell polarity, proliferation, actin cytoskeleton reorganization and apoptosis. Has a role in embryogenesis, epithelial tissue organization and angiogenesis. The protein is Inactive tyrosine-protein kinase 7 (Ptk7) of Mus musculus (Mouse).